Consider the following 143-residue polypeptide: Large ribosomal subunit protein uL11 (143 aa).

Belongs to the universal ribosomal protein uL11 family. Part of the ribosomal stalk of the 50S ribosomal subunit. Interacts with L10 and the large rRNA to form the base of the stalk. L10 forms an elongated spine to which L12 dimers bind in a sequential fashion forming a multimeric L10(L12)X complex. Post-translationally, one or more lysine residues are methylated.

Functionally, forms part of the ribosomal stalk which helps the ribosome interact with GTP-bound translation factors. This Rhizobium rhizogenes (strain K84 / ATCC BAA-868) (Agrobacterium radiobacter) protein is Large ribosomal subunit protein uL11.